A 379-amino-acid polypeptide reads, in one-letter code: 2-nitroimidazole nitrohydrolase (379 aa).

The active-site Amidino-cysteine intermediate is the Cys-357.

It belongs to the arginine deiminase family.

The enzyme catalyses 2-nitroimidazole + H2O = 1,3-dihydro-2H-imidazol-2-one + nitrite + H(+). Its function is as follows. Involved in the biodegradation of 2-Nitroimidazole (2NI) which is a natural antibiotic and an analog of the synthetic nitroimidazoles used for treatment of tuberculosis, Chagas disease (also called American Trypanosomiasis) and cancer. Catalyzes the hydrolytic denitration of 2NI to produce imidazol-2-one and nitrite. It is also active against the 2NI synthetic derivative benznidazole. NnhA confers drug resistance to 2NI. In Mycobacterium sp. (strain JS330), this protein is 2-nitroimidazole nitrohydrolase (nnhA).